Here is a 484-residue protein sequence, read N- to C-terminus: Argininosuccinate lyase (484 aa).

This sequence belongs to the lyase 1 family. Argininosuccinate lyase subfamily.

It is found in the cytoplasm. It catalyses the reaction 2-(N(omega)-L-arginino)succinate = fumarate + L-arginine. Its pathway is amino-acid biosynthesis; L-arginine biosynthesis; L-arginine from L-ornithine and carbamoyl phosphate: step 3/3. The sequence is that of Argininosuccinate lyase from Methanocaldococcus jannaschii (strain ATCC 43067 / DSM 2661 / JAL-1 / JCM 10045 / NBRC 100440) (Methanococcus jannaschii).